A 565-amino-acid chain; its full sequence is Sulfite reductase [NADPH] hemoprotein beta-component (565 aa).

Cys429, Cys435, Cys474, and Cys478 together coordinate [4Fe-4S] cluster. Cys478 contacts siroheme.

This sequence belongs to the nitrite and sulfite reductase 4Fe-4S domain family. As to quaternary structure, alpha(8)-beta(8). The alpha component is a flavoprotein, the beta component is a hemoprotein. It depends on siroheme as a cofactor. [4Fe-4S] cluster serves as cofactor.

It catalyses the reaction hydrogen sulfide + 3 NADP(+) + 3 H2O = sulfite + 3 NADPH + 4 H(+). The protein operates within sulfur metabolism; hydrogen sulfide biosynthesis; hydrogen sulfide from sulfite (NADPH route): step 1/1. In terms of biological role, component of the sulfite reductase complex that catalyzes the 6-electron reduction of sulfite to sulfide. This is one of several activities required for the biosynthesis of L-cysteine from sulfate. The polypeptide is Sulfite reductase [NADPH] hemoprotein beta-component (Shewanella baltica (strain OS223)).